Here is a 154-residue protein sequence, read N- to C-terminus: Protein FAM162A (154 aa).

A required for proapoptotic activity region spans residues 76 to 102 (RFKKEDEIPETVSLEMLDTAKNKMRVK). The chain crosses the membrane as a helical span at residues 103-120 (ISYLMIALTVVGCICMVI).

It belongs to the UPF0389 family. Interacts with HSP90AB1; HSP90AB1 is essential for FAM162A mitochondrial localization and pro-apoptotic activity. Interacts with VDAC2; the interaction is probably involved in inducing mitochondrial permeability transition.

It localises to the mitochondrion membrane. Its function is as follows. Proposed to be involved in regulation of apoptosis; the exact mechanism may differ between cell types/tissues. May be involved in hypoxia-induced cell death of transformed cells implicating cytochrome C release and caspase activation (such as CASP9) and inducing mitochondrial permeability transition. May be involved in hypoxia-induced cell death of neuronal cells probably by promoting release of AIFM1 from mitochondria to cytoplasm and its translocation to the nucleus; however, the involvement of caspases has been reported conflictingly. The chain is Protein FAM162A (FAM162A) from Pongo abelii (Sumatran orangutan).